The following is a 131-amino-acid chain: Putative gamma-taxilin 2 (131 aa).

This sequence belongs to the taxilin family. As to expression, ubiquitously expressed.

The polypeptide is Putative gamma-taxilin 2 (TXLNGY) (Homo sapiens (Human)).